The sequence spans 224 residues: Transmembrane emp24 domain-containing protein 7 (224 aa).

Positions methionine 1–alanine 34 are cleaved as a signal peptide. The Lumenal segment spans residues serine 35–alanine 187. Residues lysine 46–valine 128 form the GOLD domain. The N-linked (GlcNAc...) asparagine glycan is linked to asparagine 103. The chain crosses the membrane as a helical span at residues tyrosine 188–leucine 208. The Cytoplasmic segment spans residues lysine 209 to serine 224. Positions phenylalanine 211 to phenylalanine 212 match the COPII vesicle coat-binding motif. A COPI vesicle coat-binding motif is present at residues phenylalanine 211–serine 224.

It belongs to the EMP24/GP25L family. Predominantly monomeric and to lesser extent homodimeric in endoplasmic reticulum, endoplasmic reticulum-Golgi intermediate compartment and cis-Golgi network. Oligomerizes with other members of the EMP24/GP25L family such as TMED2, TMED9 and TMED10. Interacts (via C-terminus) with COPG1; the interaction involves dimeric TMED7. Post-translationally, N-linked glycosylated in complex form containing terminal sialic acid.

The protein resides in the endoplasmic reticulum membrane. Its subcellular location is the golgi apparatus. The protein localises to the cis-Golgi network membrane. It localises to the endoplasmic reticulum-Golgi intermediate compartment membrane. It is found in the cytoplasmic vesicle. The protein resides in the COPI-coated vesicle membrane. Its subcellular location is the COPII-coated vesicle membrane. Functionally, potential role in vesicular protein trafficking, mainly in the early secretory pathway. Appears to play a role in the biosynthesis of secreted cargo including processing and post-translational modifications. The chain is Transmembrane emp24 domain-containing protein 7 (TMED7) from Homo sapiens (Human).